Here is a 485-residue protein sequence, read N- to C-terminus: Glutamyl-tRNA(Gln) amidotransferase subunit A (485 aa).

Residues Lys78 and Ser153 each act as charge relay system in the active site. Ser177 (acyl-ester intermediate) is an active-site residue.

Belongs to the amidase family. GatA subfamily. As to quaternary structure, heterotrimer of A, B and C subunits.

It catalyses the reaction L-glutamyl-tRNA(Gln) + L-glutamine + ATP + H2O = L-glutaminyl-tRNA(Gln) + L-glutamate + ADP + phosphate + H(+). In terms of biological role, allows the formation of correctly charged Gln-tRNA(Gln) through the transamidation of misacylated Glu-tRNA(Gln) in organisms which lack glutaminyl-tRNA synthetase. The reaction takes place in the presence of glutamine and ATP through an activated gamma-phospho-Glu-tRNA(Gln). The polypeptide is Glutamyl-tRNA(Gln) amidotransferase subunit A (Bacillus cereus (strain Q1)).